Consider the following 47-residue polypeptide: uncharacterized protein (47 aa).

The interval 22–47 is disordered; the sequence is VGPRTKRANQASPPVGRHSSRLMCPG.

This is an uncharacterized protein from Saccharomyces cerevisiae (strain ATCC 204508 / S288c) (Baker's yeast).